A 71-amino-acid polypeptide reads, in one-letter code: Keratin-associated protein 6-1 (71 aa).

Belongs to the KRTAP type 6 family. As to quaternary structure, interacts with hair keratins.

Functionally, in the hair cortex, hair keratin intermediate filaments are embedded in an interfilamentous matrix, consisting of hair keratin-associated proteins (KRTAP), which are essential for the formation of a rigid and resistant hair shaft through their extensive disulfide bond cross-linking with abundant cysteine residues of hair keratins. The matrix proteins include the high-sulfur and high-glycine-tyrosine keratins. The polypeptide is Keratin-associated protein 6-1 (KRTAP6-1) (Homo sapiens (Human)).